Reading from the N-terminus, the 388-residue chain is Succinate--CoA ligase [ADP-forming] subunit beta (388 aa).

Residues 9 to 244 (KQLFAEYGLP…PSQDDAREAH (236 aa)) enclose the ATP-grasp domain. ATP is bound by residues K46, 53-55 (GRG), E99, T102, and E107. Positions 199 and 213 each coordinate Mg(2+). Residues N264 and 321–323 (GIV) contribute to the substrate site.

This sequence belongs to the succinate/malate CoA ligase beta subunit family. Heterotetramer of two alpha and two beta subunits. The cofactor is Mg(2+).

It catalyses the reaction succinate + ATP + CoA = succinyl-CoA + ADP + phosphate. The enzyme catalyses GTP + succinate + CoA = succinyl-CoA + GDP + phosphate. It functions in the pathway carbohydrate metabolism; tricarboxylic acid cycle; succinate from succinyl-CoA (ligase route): step 1/1. In terms of biological role, succinyl-CoA synthetase functions in the citric acid cycle (TCA), coupling the hydrolysis of succinyl-CoA to the synthesis of either ATP or GTP and thus represents the only step of substrate-level phosphorylation in the TCA. The beta subunit provides nucleotide specificity of the enzyme and binds the substrate succinate, while the binding sites for coenzyme A and phosphate are found in the alpha subunit. This Pseudomonas entomophila (strain L48) protein is Succinate--CoA ligase [ADP-forming] subunit beta.